A 239-amino-acid chain; its full sequence is Geranylgeranylglyceryl phosphate synthase (239 aa).

The Mg(2+) site is built by Asp19 and Ser48. Sn-glycerol 1-phosphate is bound by residues Tyr167–Gly173, Gly197–Gly198, and Gly219–Thr220.

This sequence belongs to the GGGP/HepGP synthase family. Group II subfamily. Mg(2+) is required as a cofactor.

Its subcellular location is the cytoplasm. It catalyses the reaction sn-glycerol 1-phosphate + (2E,6E,10E)-geranylgeranyl diphosphate = sn-3-O-(geranylgeranyl)glycerol 1-phosphate + diphosphate. The protein operates within membrane lipid metabolism; glycerophospholipid metabolism. In terms of biological role, prenyltransferase that catalyzes the transfer of the geranylgeranyl moiety of geranylgeranyl diphosphate (GGPP) to the C3 hydroxyl of sn-glycerol-1-phosphate (G1P). This reaction is the first ether-bond-formation step in the biosynthesis of archaeal membrane lipids. This chain is Geranylgeranylglyceryl phosphate synthase, found in Methanopyrus kandleri (strain AV19 / DSM 6324 / JCM 9639 / NBRC 100938).